A 354-amino-acid polypeptide reads, in one-letter code: Long form salivary protein D7L3 (354 aa).

The N-terminal stretch at Met1–Ser26 is a signal peptide.

This sequence belongs to the PBP/GOBP family.

Its subcellular location is the secreted. In terms of biological role, modulates blood feeding of female mosquitoes on vertebrate species by binding and sequestering different mediators involved in the host response. Binds serotonin with high affinity. Binds weakly noradrenaline and histamine. Does not bind tryptamine, octopamine, dopamine, adrenaline, leukotriene C4, leukotriene D4, leukotriene B4, ADP and U-46619, a stable analog of thromboxane A2. Inhibits agonist-induced platelet aggregation. Exhibits vasodilating activity. The protein is Long form salivary protein D7L3 of Anopheles gambiae (African malaria mosquito).